Reading from the N-terminus, the 428-residue chain is Enolase (428 aa).

Q163 provides a ligand contact to (2R)-2-phosphoglycerate. E205 functions as the Proton donor in the catalytic mechanism. Residues D242, E286, and D313 each coordinate Mg(2+). Residues K338, R367, S368, and K389 each contribute to the (2R)-2-phosphoglycerate site. Residue K338 is the Proton acceptor of the active site.

It belongs to the enolase family. Requires Mg(2+) as cofactor.

The protein localises to the cytoplasm. It is found in the secreted. It localises to the cell surface. The catalysed reaction is (2R)-2-phosphoglycerate = phosphoenolpyruvate + H2O. It participates in carbohydrate degradation; glycolysis; pyruvate from D-glyceraldehyde 3-phosphate: step 4/5. Its function is as follows. Catalyzes the reversible conversion of 2-phosphoglycerate (2-PG) into phosphoenolpyruvate (PEP). It is essential for the degradation of carbohydrates via glycolysis. The protein is Enolase of Verminephrobacter eiseniae (strain EF01-2).